The following is a 292-amino-acid chain: MDAVLEADTRAVIGEGPLWDEENGRLYWVDILGSELHIFDPEEKINRSIKFKSFVTALAKYSKDELIMTMKDGFYLYHLRDDSLEKIKQPKDMHESLRFNDAKCDPYGRLWAGTTSMEGEQKQASLYRLNLDGSLVKIKDQVSTSNGLDWDRERNLMYYIDTPTQEIVRYSYDPQSGDVSNPEPVYRFDQSDGLPDGMTIDQNGMLWVALFGGSRVVHIDPFQKKEINSISVPAKYVTCCAFGGRDLKTLYITTATEQMTEKERYEQPHAGGLFSAQLETGGYQPVPFAGDV.

Positions 15, 146, and 196 each coordinate a divalent metal cation.

The protein belongs to the SMP-30/CGR1 family. It depends on a divalent metal cation as a cofactor.

The protein resides in the cytoplasm. The protein is Putative sugar lactone lactonase YvrE (yvrE) of Bacillus subtilis (strain 168).